We begin with the raw amino-acid sequence, 325 residues long: Cyclic AMP-responsive element-binding protein 1 (325 aa).

Polar residues-rich tracts occupy residues 1-11 and 18-27; these read MESGAENQQSG and AESQQMTVQA. 2 disordered regions span residues 1 to 27 and 92 to 111; these read MESG…TVQA and SEDS…RREI. Residues 85 to 144 form the KID domain; it reads QISTIAESEDSQESVDSVTDSQKRREILSRRPSYRKILNDLSSDAPGVPRIEEEKSEEET. The residue at position 117 (Ser117) is a Phosphoserine; by CaMK1, CaMK2, CaMK4, PKB/AKT1 or PKB/AKT2, RPS6KA3, RPS6KA4, RPS6KA5 and SGK1. Residue Lys120 forms a Glycyl lysine isopeptide (Lys-Gly) (interchain with G-Cter in SUMO2) linkage. Residues 124 to 146 are disordered; it reads DLSSDAPGVPRIEEEKSEEETSA. At Ser126 the chain carries Phosphoserine; by CaMK2. Residue Ser255 is modified to Phosphoserine; by HIPK2. Positions 267-325 constitute a bZIP domain; the sequence is ARKREVRLMKNREAARECRRKKKEYVKCLENRVAVLENQNKTLIEELKALKDLYCHKSD. Residues 268-293 form a basic motif region; the sequence is RKREVRLMKNREAARECRRKKKEYVK. Residues Lys269 and Lys288 each participate in a glycyl lysine isopeptide (Lys-Gly) (interchain with G-Cter in SUMO1) cross-link. The tract at residues 295–316 is leucine-zipper; sequence LENRVAVLENQNKTLIEELKAL.

This sequence belongs to the bZIP family. In terms of assembly, interacts with PPRC1. Binds DNA as a dimer. This dimer is stabilized by magnesium ions. Interacts, through the bZIP domain, with the coactivators CRTC1/TORC1, CRTC2/TORC2 and CRTC3/TORC3. When phosphorylated on Ser-117, binds CREBBP. Interacts with CREBL2; regulates CREB1 phosphorylation, stability and transcriptional activity. Interacts (phosphorylated form) with TOX3. Interacts with ARRB1. Binds to HIPK2. Interacts with SGK1. Interacts with TSSK4; this interaction facilitates phosphorylation on Ser-117. Forms a complex with KMT2A and CREBBP. Interacts with TOX4; CREB1 is required for full induction of TOX4-dependent activity and the interaction is increased by cAMP and inhibited by insulin. Sumoylated with SUMO1. Sumoylation on Lys-288, but not on Lys-269, is required for nuclear localization of this protein. Sumoylation is enhanced under hypoxia, promoting nuclear localization and stabilization. In terms of processing, stimulated by phosphorylation. Phosphorylation of both Ser-117 and Ser-126 in the SCN regulates the activity of CREB and participates in circadian rhythm generation. Phosphorylation of Ser-117 allows CREBBP binding. Phosphorylated upon calcium influx by CaMK4 and CaMK2 on Ser-117. CaMK4 is much more potent than CaMK2 in activating CREB. Phosphorylated by CaMK2 on Ser-126. Phosphorylation of Ser-126 blocks CREB-mediated transcription even when Ser-117 is phosphorylated. Phosphorylated by CaMK1. Phosphorylation of Ser-255 by HIPK2 in response to genotoxic stress promotes CREB1 activity, facilitating the recruitment of the coactivator CBP. Phosphorylated at Ser-117 by RPS6KA3, RPS6KA4 and RPS6KA5 in response to mitogenic or stress stimuli. CREBL2 positively regulates phosphorylation at Ser-117 thereby stimulating CREB1 transcriptional activity. In liver, phosphorylation is induced by fasting or glucagon in a circadian fashion. Phosphorylated by TSSK4 on Ser-117.

The protein resides in the nucleus. Functionally, phosphorylation-dependent transcription factor that stimulates transcription upon binding to the DNA cAMP response element (CRE), a sequence present in many viral and cellular promoters. Transcription activation is enhanced by the TORC coactivators which act independently of Ser-117 phosphorylation. Involved in different cellular processes including the synchronization of circadian rhythmicity and the differentiation of adipose cells. Regulates the expression of apoptotic and inflammatory response factors in cardiomyocytes in response to ERFE-mediated activation of AKT signaling. The protein is Cyclic AMP-responsive element-binding protein 1 (CREB1) of Bos taurus (Bovine).